The primary structure comprises 440 residues: Streptokinase A (440 aa).

Residues Met-1–Ala-26 form the signal peptide.

This protein is not a protease, but it activates plasminogen by complexing with it. As a potential virulence factor, it is thought to prevent the formation of effective fibrin barriers around the site of infection, thereby contributing to the invasiveness of the cells. The sequence is that of Streptokinase A (ska) from Streptococcus pyogenes serotype M1.